The following is an 88-amino-acid chain: UPF0297 protein EAT1b_2723 (88 aa).

Belongs to the UPF0297 family.

This chain is UPF0297 protein EAT1b_2723, found in Exiguobacterium sp. (strain ATCC BAA-1283 / AT1b).